Reading from the N-terminus, the 955-residue chain is Glycine dehydrogenase (decarboxylating) (955 aa).

Residue Lys702 is modified to N6-(pyridoxal phosphate)lysine.

The protein belongs to the GcvP family. As to quaternary structure, the glycine cleavage system is composed of four proteins: P, T, L and H. Requires pyridoxal 5'-phosphate as cofactor.

It catalyses the reaction N(6)-[(R)-lipoyl]-L-lysyl-[glycine-cleavage complex H protein] + glycine + H(+) = N(6)-[(R)-S(8)-aminomethyldihydrolipoyl]-L-lysyl-[glycine-cleavage complex H protein] + CO2. Its function is as follows. The glycine cleavage system catalyzes the degradation of glycine. The P protein binds the alpha-amino group of glycine through its pyridoxal phosphate cofactor; CO(2) is released and the remaining methylamine moiety is then transferred to the lipoamide cofactor of the H protein. In Bradyrhizobium diazoefficiens (strain JCM 10833 / BCRC 13528 / IAM 13628 / NBRC 14792 / USDA 110), this protein is Glycine dehydrogenase (decarboxylating).